Reading from the N-terminus, the 179-residue chain is Large ribosomal subunit protein uL6 (179 aa).

This sequence belongs to the universal ribosomal protein uL6 family. Part of the 50S ribosomal subunit.

In terms of biological role, this protein binds to the 23S rRNA, and is important in its secondary structure. It is located near the subunit interface in the base of the L7/L12 stalk, and near the tRNA binding site of the peptidyltransferase center. This is Large ribosomal subunit protein uL6 from Legionella pneumophila (strain Paris).